Reading from the N-terminus, the 230-residue chain is NAD-dependent protein deacylase 1 (230 aa).

Residues 1-226 (MESGIPTYRE…SHLSAFLSRE (226 aa)) form the Deacetylase sirtuin-type domain. Substrate-binding residues include Tyr-41 and Arg-44. 75-78 (QNID) contacts NAD(+). The active-site Proton acceptor is His-93. Zn(2+) contacts are provided by Cys-101, Cys-104, Cys-128, and Cys-131. Residues 168 to 170 (GTS), 194 to 196 (NTV), and Ala-212 each bind NAD(+).

It belongs to the sirtuin family. Class III subfamily. Zn(2+) serves as cofactor.

It localises to the cytoplasm. It carries out the reaction N(6)-acetyl-L-lysyl-[protein] + NAD(+) + H2O = 2''-O-acetyl-ADP-D-ribose + nicotinamide + L-lysyl-[protein]. It catalyses the reaction N(6)-succinyl-L-lysyl-[protein] + NAD(+) + H2O = 2''-O-succinyl-ADP-D-ribose + nicotinamide + L-lysyl-[protein]. Its function is as follows. NAD-dependent lysine deacetylase and desuccinylase that specifically removes acetyl and succinyl groups on target proteins. Modulates the activities of several proteins which are inactive in their acylated form. The protein is NAD-dependent protein deacylase 1 of Pseudomonas syringae pv. tomato (strain ATCC BAA-871 / DC3000).